The sequence spans 258 residues: Type III pantothenate kinase (258 aa).

6-13 (DVGNTNIV) contributes to the ATP binding site. Substrate-binding positions include Tyr100 and 107 to 110 (GADR). The active-site Proton acceptor is Asp109. Asp129 is a K(+) binding site. An ATP-binding site is contributed by Thr132. Residue Thr184 coordinates substrate.

Belongs to the type III pantothenate kinase family. Homodimer. It depends on NH4(+) as a cofactor. The cofactor is K(+).

The protein resides in the cytoplasm. It carries out the reaction (R)-pantothenate + ATP = (R)-4'-phosphopantothenate + ADP + H(+). It functions in the pathway cofactor biosynthesis; coenzyme A biosynthesis; CoA from (R)-pantothenate: step 1/5. In terms of biological role, catalyzes the phosphorylation of pantothenate (Pan), the first step in CoA biosynthesis. This Desulfitobacterium hafniense (strain DSM 10664 / DCB-2) protein is Type III pantothenate kinase.